The chain runs to 384 residues: 1-deoxy-D-xylulose 5-phosphate reductoisomerase (384 aa).

Residues Thr10, Gly11, Ser12, Ile13, Arg37, Asn38, and Asn124 each contribute to the NADPH site. Lys125 contacts 1-deoxy-D-xylulose 5-phosphate. Glu126 contributes to the NADPH binding site. Asp150 contributes to the Mn(2+) binding site. Positions 151, 152, 176, and 199 each coordinate 1-deoxy-D-xylulose 5-phosphate. Position 152 (Glu152) interacts with Mn(2+). Residue Gly205 coordinates NADPH. Ser212, Asn217, Lys218, and Glu221 together coordinate 1-deoxy-D-xylulose 5-phosphate. A Mn(2+)-binding site is contributed by Glu221.

The protein belongs to the DXR family. Mg(2+) serves as cofactor. The cofactor is Mn(2+).

The enzyme catalyses 2-C-methyl-D-erythritol 4-phosphate + NADP(+) = 1-deoxy-D-xylulose 5-phosphate + NADPH + H(+). The protein operates within isoprenoid biosynthesis; isopentenyl diphosphate biosynthesis via DXP pathway; isopentenyl diphosphate from 1-deoxy-D-xylulose 5-phosphate: step 1/6. Catalyzes the NADPH-dependent rearrangement and reduction of 1-deoxy-D-xylulose-5-phosphate (DXP) to 2-C-methyl-D-erythritol 4-phosphate (MEP). This Clostridium perfringens (strain SM101 / Type A) protein is 1-deoxy-D-xylulose 5-phosphate reductoisomerase.